The sequence spans 664 residues: Glycine--tRNA ligase beta subunit (664 aa).

The protein belongs to the class-II aminoacyl-tRNA synthetase family. Tetramer of two alpha and two beta subunits.

Its subcellular location is the cytoplasm. It catalyses the reaction tRNA(Gly) + glycine + ATP = glycyl-tRNA(Gly) + AMP + diphosphate. This Rickettsia felis (strain ATCC VR-1525 / URRWXCal2) (Rickettsia azadi) protein is Glycine--tRNA ligase beta subunit.